The sequence spans 149 residues: UPAR/Ly6 domain-containing protein bou (149 aa).

The first 31 residues, 1–31, serve as a signal peptide directing secretion; sequence MWPPKHAHIGWLSSLALVVLLMSLQMVMVSG. The Extracellular segment spans residues 32–126; the sequence is IECYVCDTSD…YTCDTDGCNA (95 aa). 5 disulfides stabilise this stretch: C34/C74, C37/C48, C65/C91, C100/C115, and C119/C124. N64 carries N-linked (GlcNAc...) asparagine glycosylation. A lipid anchor (GPI-anchor amidated asparagine) is attached at N125. A propeptide spans 126 to 149 (removed in mature form); that stretch reads AAGRLELEWGVAAALLTLTWLLRH. The helical transmembrane segment at 127-147 threads the bilayer; the sequence is AGRLELEWGVAAALLTLTWLL. The Cytoplasmic segment spans residues 148-149; that stretch reads RH.

Post-translationally, GPI-anchored.

It localises to the cell membrane. The protein resides in the cell junction. It is found in the septate junction. Its subcellular location is the cytoplasm. The protein localises to the cell cortex. It localises to the secreted. The protein resides in the apicolateral cell membrane. Functionally, involved in tracheal paracellular barrier functions mediated by epithelial cell septate junctions. Involved in paracellular barrier functions mediated by glial cell septate junctions in the peripheral nervous system, including the chordotonal organs, but not the hemolymph-brain barrier (the insect blood-brain barrier) of the central nervous system. Required for septate junction assembly, possibly by organizing the preassembly and transport of septate junction proteins such as dlg1/disks large 1, Nrx-IV/Neurexin-IV and the claudin protein kune. Involved in chitin fiber organization during tracheal development. Secreted, possibly in association with extracellular vesicles, to act non-autonomously on tissues distant from its site of expression. In Drosophila melanogaster (Fruit fly), this protein is UPAR/Ly6 domain-containing protein bou.